A 365-amino-acid polypeptide reads, in one-letter code: MNAQTHTVLDLVRQELRSFAGYSSARSVALTGDLWLNANESAWPNPADSHATMRRYPEPQPPKLRQMLAALYGCLPEQVLIGRGSDEGIDLLVRAVCEPRRDPVLVTPPVFGMYAVSAQLQNAPLIQVPLVDDAAGFHADVPAIITAAQTSRAKLVFLCSPSNPVGAAIPLQQIETILQTLAGTALVVVDEAYGEFSDVPSVVPLLARYPHLVVLRTLSKAHALAAVRIGSVIADAHLVAVLRRCQAPYPLPTPCVSLAEQGLSAAALHVTAQRVAEIRAERERLRAALACLSGVRRVYPSQGNFLLVRFDDAEAAFQALYAAGVVVRDQRAAPQLHDALRLTVGTPEQNTRLLAVLRDIQAVPA.

Lysine 220 is modified (N6-(pyridoxal phosphate)lysine).

Belongs to the class-II pyridoxal-phosphate-dependent aminotransferase family. Histidinol-phosphate aminotransferase subfamily. In terms of assembly, homodimer. Pyridoxal 5'-phosphate serves as cofactor.

It catalyses the reaction L-histidinol phosphate + 2-oxoglutarate = 3-(imidazol-4-yl)-2-oxopropyl phosphate + L-glutamate. Its pathway is amino-acid biosynthesis; L-histidine biosynthesis; L-histidine from 5-phospho-alpha-D-ribose 1-diphosphate: step 7/9. The polypeptide is Histidinol-phosphate aminotransferase (hisC) (Xylella fastidiosa (strain Temecula1 / ATCC 700964)).